Consider the following 173-residue polypeptide: Cyclic pyranopterin monophosphate synthase (173 aa).

Substrate contacts are provided by residues 75 to 77 (MCH) and 117 to 118 (ME). The active site involves Asp132. Residues 152-173 (SGGKSGHYQRENSSVGGFANEQ) form a disordered region. A compositionally biased stretch (polar residues) spans 162–173 (ENSSVGGFANEQ).

The protein belongs to the MoaC family. In terms of assembly, homohexamer; trimer of dimers.

The catalysed reaction is (8S)-3',8-cyclo-7,8-dihydroguanosine 5'-triphosphate = cyclic pyranopterin phosphate + diphosphate. It participates in cofactor biosynthesis; molybdopterin biosynthesis. Catalyzes the conversion of (8S)-3',8-cyclo-7,8-dihydroguanosine 5'-triphosphate to cyclic pyranopterin monophosphate (cPMP). This Geobacillus sp. (strain WCH70) protein is Cyclic pyranopterin monophosphate synthase.